The chain runs to 132 residues: Large ribosomal subunit protein uL14 (132 aa).

This sequence belongs to the universal ribosomal protein uL14 family. Part of the 50S ribosomal subunit. Forms a cluster with proteins L3 and L24e, part of which may contact the 16S rRNA in 2 intersubunit bridges.

Binds to 23S rRNA. Forms part of two intersubunit bridges in the 70S ribosome. The polypeptide is Large ribosomal subunit protein uL14 (Methanothrix thermoacetophila (strain DSM 6194 / JCM 14653 / NBRC 101360 / PT) (Methanosaeta thermophila)).